The following is a 339-amino-acid chain: Ketol-acid reductoisomerase (NADP(+)) (339 aa).

The region spanning 1 to 182 (MRVYYDRDAD…GGGRSGVIET (182 aa)) is the KARI N-terminal Rossmann domain. NADP(+) contacts are provided by residues 24–27 (YGSQ), arginine 48, serine 51, threonine 53, and 83–86 (DELQ). Histidine 108 is an active-site residue. Position 134 (glycine 134) interacts with NADP(+). Residues 183–328 (NFREECETDL…GRLRAMMPWI (146 aa)) form the KARI C-terminal knotted domain. Mg(2+) is bound by residues aspartate 191, glutamate 195, glutamate 227, and glutamate 231. Serine 252 contacts substrate.

This sequence belongs to the ketol-acid reductoisomerase family. The cofactor is Mg(2+).

It carries out the reaction (2R)-2,3-dihydroxy-3-methylbutanoate + NADP(+) = (2S)-2-acetolactate + NADPH + H(+). It catalyses the reaction (2R,3R)-2,3-dihydroxy-3-methylpentanoate + NADP(+) = (S)-2-ethyl-2-hydroxy-3-oxobutanoate + NADPH + H(+). It participates in amino-acid biosynthesis; L-isoleucine biosynthesis; L-isoleucine from 2-oxobutanoate: step 2/4. It functions in the pathway amino-acid biosynthesis; L-valine biosynthesis; L-valine from pyruvate: step 2/4. In terms of biological role, involved in the biosynthesis of branched-chain amino acids (BCAA). Catalyzes an alkyl-migration followed by a ketol-acid reduction of (S)-2-acetolactate (S2AL) to yield (R)-2,3-dihydroxy-isovalerate. In the isomerase reaction, S2AL is rearranged via a Mg-dependent methyl migration to produce 3-hydroxy-3-methyl-2-ketobutyrate (HMKB). In the reductase reaction, this 2-ketoacid undergoes a metal-dependent reduction by NADPH to yield (R)-2,3-dihydroxy-isovalerate. In Phenylobacterium zucineum (strain HLK1), this protein is Ketol-acid reductoisomerase (NADP(+)).